The primary structure comprises 638 residues: Sodium- and chloride-dependent glycine transporter 1 (638 aa).

A disordered region spans residues 1-30 (MAVAHGPVATSSPEQNGAVPSEATKKDQNL). Over 1 to 40 (MAVAHGPVATSSPEQNGAVPSEATKKDQNLTRGNWGNQIE) the chain is Cytoplasmic. The next 3 helical transmembrane spans lie at 41-61 (FVLT…FPYL), 68-88 (GAFM…LFFM), and 120-140 (VSTY…YYFF). Residues 141-217 (SSMTHVLPWA…LSDDIGDFGE (77 aa)) are Extracellular-facing. N-linked (GlcNAc...) asparagine glycans are attached at residues asparagine 169, asparagine 172, asparagine 182, and asparagine 188. 9 helical membrane passes run 218-238 (VRLP…LCLI), 247-267 (VVYF…VRGV), 292-312 (VWGD…GGLI), 339-359 (SVYA…HLGV), 382-402 (LLPI…LLGL), 438-458 (VAGF…WLLL), 462-482 (YAAS…IMYI), 502-522 (LFFQ…ILIF), and 542-562 (VAIG…YALF). The Cytoplasmic segment spans residues 563-638 (QLCRTDGDTL…GSSRLQDSRI (76 aa)). Threonine 603 carries the post-translational modification Phosphothreonine. Serine 605 and serine 630 each carry phosphoserine. Residues 627–638 (SNGSSRLQDSRI) form an essential for interaction with EXOC1 region.

Belongs to the sodium:neurotransmitter symporter (SNF) (TC 2.A.22) family. SLC6A9 subfamily. As to quaternary structure, interacts with EXOC1; interaction increases the transporter capacity of SLC6A9 probably by promoting its insertion into the cell membrane. Interacts with EXOC3 and EXOC4. Found only in the white matter of the CNS. As to expression, found in the gray matter of CNS as well as in macrophages and mast cells in peripheral tissues.

It is found in the cell membrane. The enzyme catalyses glycine(out) + chloride(out) + 2 Na(+)(out) = glycine(in) + chloride(in) + 2 Na(+)(in). Inhibited by sarcosine. Functionally, sodium- and chloride-dependent glycine transporter. Essential for regulating glycine concentrations at inhibitory glycinergic synapses. This Rattus norvegicus (Rat) protein is Sodium- and chloride-dependent glycine transporter 1 (Slc6a9).